The sequence spans 191 residues: MSDKKKNAEEFEETFSDKTSEDESTVENETVEENENEDVQAISEVDDLKAQLDEMEDKYLRASAELSNMNNRFRNERQTLQRYRSQDLGKKLLPAIDNLERAVAIEVEGEQNESLKKGVEMTLESLRSAMQEEGIEEISAQGETFDPTLHQAVQTVPATEDHPAETVVEVLQKGYKIYDRVLRASMVVVAQ.

A compositionally biased stretch (basic and acidic residues) spans 1-21 (MSDKKKNAEEFEETFSDKTSE). The disordered stretch occupies residues 1 to 39 (MSDKKKNAEEFEETFSDKTSEDESTVENETVEENENEDV). Positions 22–38 (DESTVENETVEENENED) are enriched in acidic residues.

It belongs to the GrpE family. Homodimer.

It is found in the cytoplasm. Participates actively in the response to hyperosmotic and heat shock by preventing the aggregation of stress-denatured proteins, in association with DnaK and GrpE. It is the nucleotide exchange factor for DnaK and may function as a thermosensor. Unfolded proteins bind initially to DnaJ; upon interaction with the DnaJ-bound protein, DnaK hydrolyzes its bound ATP, resulting in the formation of a stable complex. GrpE releases ADP from DnaK; ATP binding to DnaK triggers the release of the substrate protein, thus completing the reaction cycle. Several rounds of ATP-dependent interactions between DnaJ, DnaK and GrpE are required for fully efficient folding. This chain is Protein GrpE, found in Tetragenococcus halophilus (Pediococcus halophilus).